A 353-amino-acid polypeptide reads, in one-letter code: N-methyltransferase (353 aa).

The S-adenosyl-L-homocysteine site is built by serine 171, alanine 195, aspartate 218, aspartate 238, and lysine 252. Position 218 (aspartate 218) interacts with S-adenosyl-L-methionine.

This sequence belongs to the class I-like SAM-binding methyltransferase superfamily. Cation-independent O-methyltransferase family. Homodimer. Expressed at high levels in all tissues.

It catalyses the reaction 3-methoxytyramine + S-adenosyl-L-methionine = N-methyl-3-methoxytyramine + S-adenosyl-L-homocysteine + H(+). The enzyme catalyses mescaline + S-adenosyl-L-methionine = N-methylmescaline + S-adenosyl-L-homocysteine + H(+). It carries out the reaction tyramine + S-adenosyl-L-methionine = N-methyltyramine + S-adenosyl-L-homocysteine + H(+). The catalysed reaction is 4-hydroxy-3,5-dimethoxyphenethylamine + S-adenosyl-L-methionine = N-methyl-4-hydroxy-3,5-dimethoxyphenethylamine + S-adenosyl-L-homocysteine + H(+). Its pathway is aromatic compound metabolism. The protein operates within alkaloid biosynthesis. Functionally, N-methyltransferase participating in the biosynthesis of natural products derived from phenylethylamine, including mescaline, a natural hallucinogen potentially used in psychotherapeutic treatments. Catalyzes the N-methylation of many substrates, including 3-methoxytyramine, 5-hydroxy-3,4-dimethoxyphenethylamine, 4-hydroxy-3,5-dimethoxyphenethylamine, tyramine and mescaline. The chain is N-methyltransferase from Lophophora williamsii (Peyote).